The following is a 170-amino-acid chain: Crossover junction endodeoxyribonuclease RuvC (170 aa).

Active-site residues include D9, E70, and D145. Residues D9, E70, and D145 each contribute to the Mg(2+) site.

This sequence belongs to the RuvC family. As to quaternary structure, homodimer which binds Holliday junction (HJ) DNA. The HJ becomes 2-fold symmetrical on binding to RuvC with unstacked arms; it has a different conformation from HJ DNA in complex with RuvA. In the full resolvosome a probable DNA-RuvA(4)-RuvB(12)-RuvC(2) complex forms which resolves the HJ. Mg(2+) serves as cofactor.

Its subcellular location is the cytoplasm. The catalysed reaction is Endonucleolytic cleavage at a junction such as a reciprocal single-stranded crossover between two homologous DNA duplexes (Holliday junction).. Functionally, the RuvA-RuvB-RuvC complex processes Holliday junction (HJ) DNA during genetic recombination and DNA repair. Endonuclease that resolves HJ intermediates. Cleaves cruciform DNA by making single-stranded nicks across the HJ at symmetrical positions within the homologous arms, yielding a 5'-phosphate and a 3'-hydroxyl group; requires a central core of homology in the junction. The consensus cleavage sequence is 5'-(A/T)TT(C/G)-3'. Cleavage occurs on the 3'-side of the TT dinucleotide at the point of strand exchange. HJ branch migration catalyzed by RuvA-RuvB allows RuvC to scan DNA until it finds its consensus sequence, where it cleaves and resolves the cruciform DNA. This Chlamydia trachomatis serovar L2 (strain ATCC VR-902B / DSM 19102 / 434/Bu) protein is Crossover junction endodeoxyribonuclease RuvC.